Here is a 654-residue protein sequence, read N- to C-terminus: Beta-galactosidase-1-like protein (654 aa).

The signal sequence occupies residues 1 to 27 (MAPKKPSCLRSLLLPLSLTLLLPQADT). N-linked (GlcNAc...) asparagine glycosylation occurs at Asn-97. Residue Glu-186 is the Proton donor of the active site. A glycan (N-linked (GlcNAc...) asparagine) is linked at Asn-243. Glu-264 functions as the Nucleophile in the catalytic mechanism.

Belongs to the glycosyl hydrolase 35 family.

The protein localises to the secreted. Its function is as follows. Probable glycosyl hydrolase. This chain is Beta-galactosidase-1-like protein (GLB1L), found in Macaca fascicularis (Crab-eating macaque).